Consider the following 80-residue polypeptide: UPF0291 protein llmg_1475 (80 aa).

The protein belongs to the UPF0291 family.

Its subcellular location is the cytoplasm. The sequence is that of UPF0291 protein llmg_1475 from Lactococcus lactis subsp. cremoris (strain MG1363).